The following is a 322-amino-acid chain: Probable transposase for insertion sequence element ISA1214 (322 aa).

It belongs to the transposase 11 family.

Involved in the transposition of the insertion sequence ISA1214. This Archaeoglobus fulgidus (strain ATCC 49558 / DSM 4304 / JCM 9628 / NBRC 100126 / VC-16) protein is Probable transposase for insertion sequence element ISA1214.